Reading from the N-terminus, the 1141-residue chain is LRR receptor-like serine/threonine-protein kinase RGI1 (1141 aa).

Residues 1–33 (MSLHSLIFFSSSSSSLLFSFFFIFIFCFSLSDA) form the signal peptide. Residues 34–726 (EQNPEASILY…DASRTRKLRL (693 aa)) are Extracellular-facing. Cys69 and Cys77 are joined by a disulfide. N-linked (GlcNAc...) asparagine glycosylation occurs at Asn71. LRR repeat units lie at residues 80–104 (QGFI…LPAF), 105–128 (RSLQ…LGDC), 130–152 (GLKV…LSKL), 153–176 (RNLE…ISKC), 178–200 (KLKS…LGKL), 202–225 (GLEV…IGDC), 226–249 (SNLT…LGKL), 250–273 (KKLE…LGNC), 275–297 (ELVD…IGQL), 298–321 (TKLE…IGNC), 322–345 (SNLK…IGRL), 347–369 (FLEE…ISNC), 370–392 (SSLV…ELGT), 394–417 (TKLT…LADC), 418–441 (TDLQ…LFML), 443–464 (NLTK…EIGN), 465–489 (CSSL…IGSL), 490–513 (KKIN…IGSC), 514–537 (SELQ…VSSL), 538–561 (SGLQ…LGRL), 563–585 (SLNK…LGMC), 586–609 (SGLQ…LGDI), 610–634 (ENLE…IASL), 636–657 (KLSI…LANI), and 658–682 (ENLV…LFRQ). Asn116 is a glycosylation site (N-linked (GlcNAc...) asparagine). 2 consecutive short sequence motifs (small peptide recognition) follow at residues 185–186 (FD) and 207–210 (RIGG). The N-linked (GlcNAc...) asparagine glycan is linked to Asn227. 2 short sequence motifs (small peptide recognition) span residues 230-235 (VLGLAE) and Tyr258. The N-linked (GlcNAc...) asparagine glycan is linked to Asn272. The Small peptide recognition motif lies at 280 to 282 (FLY). Asn320 carries an N-linked (GlcNAc...) asparagine glycan. 2 consecutive short sequence motifs (small peptide recognition) follow at residues 328 to 331 (DLSL) and 350 to 352 (EFM). The N-linked (GlcNAc...) asparagine glycan is linked to Asn368. Short sequence motifs (small peptide recognition) lie at residues 398-402 (LFFAW) and 424-427 (DLSR). Residue Asn443 is glycosylated (N-linked (GlcNAc...) asparagine). The short motif at 446–450 (KLLLI) is the Small peptide recognition element. Asn464 is a glycosylation site (N-linked (GlcNAc...) asparagine). The Small peptide recognition motif lies at 470 to 472 (RLR). An N-linked (GlcNAc...) asparagine glycan is attached at Asn523. An N-linked (GlcNAc...) asparagine glycan is attached at Asn617. Asn664 carries N-linked (GlcNAc...) asparagine glycosylation. The helical transmembrane segment at 727-747 (TLALLITLTVVLMILGAVAVI) threads the bilayer. Residues 748–1141 (RARRNIDNER…LLYSSSSSIE (394 aa)) are Cytoplasmic-facing. Positions 786-1074 (LVEPNVIGKG…EIKQEREEYA (289 aa)) constitute a Protein kinase domain. ATP is bound by residues 792–800 (IGKGCSGVV) and Lys814. Tyr868 and Tyr906 each carry phosphotyrosine. Asp919 acts as the Proton acceptor in catalysis. 2 positions are modified to phosphotyrosine: Tyr962 and Tyr969.

The protein belongs to the protein kinase superfamily. Ser/Thr protein kinase family. As to quaternary structure, interacts with beet curly top virus AL4/C4. Binds to RGF peptides such as RGF1, GLV5/CLEL1/RGF2, GLV7/CLEL3/RGF3, GLV3/RGF4, GLV10/CLEL7/RGF5 and RGF10/CLELN; these interactions trigger the formation of heterodimers with SERK1, SERK2 or BAK1/SERK3 via LRR regions. Interacts with UBP13. Post-translationally, phosphorylated and ubiquitinated upon interaction with RGF1, thus leading to activation a subsequent degradation. Stabilized by UBP12 and UBP13-mediated deubiquitination. In terms of processing, autophosphorylated. In terms of tissue distribution, expressed in roots.

The protein resides in the cell membrane. It catalyses the reaction L-seryl-[protein] + ATP = O-phospho-L-seryl-[protein] + ADP + H(+). The enzyme catalyses L-threonyl-[protein] + ATP = O-phospho-L-threonyl-[protein] + ADP + H(+). Functionally, together with RGI2, RGI3, RGI4 and RGI5, acts as a receptor of RGF peptides (e.g. RGF1, GLV5/CLEL1/RGF2, GLV7/CLEL3/RGF3, GLV3/RGF4, GLV10/CLEL7/RGF5 and RGF10/CLELN), peptide hormones which maintain the postembryonic root stem cell niche by regulating the expression levels and patterns of the transcription factor PLETHORA (PLT, e.g. PLT1 and PLT2). Links RGF peptides signal with their downstream components. The protein is LRR receptor-like serine/threonine-protein kinase RGI1 of Arabidopsis thaliana (Mouse-ear cress).